The primary structure comprises 588 residues: Tannase (588 aa).

The signal sequence occupies residues Met1–Ala18. Disulfide bonds link Cys25/Cys71, Cys194/Cys502, and Cys261/Cys278. Residue Ser195 is the Acyl-ester intermediate of the active site. Residues Asp262, Asp265, Asp269, and Val271 each coordinate Ca(2+). A Pyrrolidone carboxylic acid modification is found at Gln317. Catalysis depends on charge relay system residues Asp455 and His501.

It belongs to the tannase family. As to quaternary structure, heterooctamer of 4 33 kDa and 4 30 kDa subunits linked by disulfide bond(s). In terms of processing, the protein is glycosylated to a carbohydrate content of 22.7%. The N-terminus of the 30 kDa subunit is blocked.

It carries out the reaction digallate + H2O = 2 3,4,5-trihydroxybenzoate + H(+). In terms of biological role, hydrolyzes ester bonds of tannic acid to produce gallic acid and glucose. This chain is Tannase, found in Aspergillus oryzae (strain ATCC 42149 / RIB 40) (Yellow koji mold).